The sequence spans 311 residues: 2-phospho-L-lactate transferase (311 aa).

2 residues coordinate 7,8-didemethyl-8-hydroxy-5-deazariboflavin: Asp-52 and Arg-91.

This sequence belongs to the CofD family. In terms of assembly, homodimer. It depends on Mg(2+) as a cofactor.

The enzyme catalyses (2S)-lactyl-2-diphospho-5'-guanosine + 7,8-didemethyl-8-hydroxy-5-deazariboflavin = oxidized coenzyme F420-0 + GMP + H(+). The protein operates within cofactor biosynthesis; coenzyme F420 biosynthesis. Its activity is regulated as follows. Inhibited by EDTA in vitro. Functionally, catalyzes the transfer of the 2-phospholactate moiety from (2S)-lactyl-2-diphospho-5'-guanosine to 7,8-didemethyl-8-hydroxy-5-deazariboflavin (FO) with the formation of oxidized coenzyme F420-0 and GMP. This chain is 2-phospho-L-lactate transferase, found in Methanocaldococcus jannaschii (strain ATCC 43067 / DSM 2661 / JAL-1 / JCM 10045 / NBRC 100440) (Methanococcus jannaschii).